The following is a 407-amino-acid chain: Arginine biosynthesis bifunctional protein ArgJ (407 aa).

Substrate-binding residues include Thr-157, Lys-183, Thr-194, Glu-280, Asn-402, and Thr-407. Thr-194 serves as the catalytic Nucleophile.

Belongs to the ArgJ family. As to quaternary structure, heterotetramer of two alpha and two beta chains.

It is found in the cytoplasm. The catalysed reaction is N(2)-acetyl-L-ornithine + L-glutamate = N-acetyl-L-glutamate + L-ornithine. It carries out the reaction L-glutamate + acetyl-CoA = N-acetyl-L-glutamate + CoA + H(+). It functions in the pathway amino-acid biosynthesis; L-arginine biosynthesis; L-ornithine and N-acetyl-L-glutamate from L-glutamate and N(2)-acetyl-L-ornithine (cyclic): step 1/1. The protein operates within amino-acid biosynthesis; L-arginine biosynthesis; N(2)-acetyl-L-ornithine from L-glutamate: step 1/4. Functionally, catalyzes two activities which are involved in the cyclic version of arginine biosynthesis: the synthesis of N-acetylglutamate from glutamate and acetyl-CoA as the acetyl donor, and of ornithine by transacetylation between N(2)-acetylornithine and glutamate. This is Arginine biosynthesis bifunctional protein ArgJ from Oceanobacillus iheyensis (strain DSM 14371 / CIP 107618 / JCM 11309 / KCTC 3954 / HTE831).